The primary structure comprises 1183 residues: DNA-directed RNA polymerase subunit beta (1183 aa).

It belongs to the RNA polymerase beta chain family. In terms of assembly, the RNAP catalytic core consists of 2 alpha, 1 beta, 1 beta' and 1 omega subunit. When a sigma factor is associated with the core the holoenzyme is formed, which can initiate transcription.

It catalyses the reaction RNA(n) + a ribonucleoside 5'-triphosphate = RNA(n+1) + diphosphate. DNA-dependent RNA polymerase catalyzes the transcription of DNA into RNA using the four ribonucleoside triphosphates as substrates. The sequence is that of DNA-directed RNA polymerase subunit beta from Staphylococcus aureus (strain Mu50 / ATCC 700699).